The following is a 507-amino-acid chain: Probable cytosol aminopeptidase (507 aa).

Residues Lys-269 and Asp-274 each coordinate Mn(2+). Lys-281 is a catalytic residue. The Mn(2+) site is built by Asp-292, Asp-351, and Glu-353. Arg-355 is a catalytic residue.

The protein belongs to the peptidase M17 family. The cofactor is Mn(2+).

It is found in the cytoplasm. The catalysed reaction is Release of an N-terminal amino acid, Xaa-|-Yaa-, in which Xaa is preferably Leu, but may be other amino acids including Pro although not Arg or Lys, and Yaa may be Pro. Amino acid amides and methyl esters are also readily hydrolyzed, but rates on arylamides are exceedingly low.. The enzyme catalyses Release of an N-terminal amino acid, preferentially leucine, but not glutamic or aspartic acids.. Functionally, presumably involved in the processing and regular turnover of intracellular proteins. Catalyzes the removal of unsubstituted N-terminal amino acids from various peptides. The protein is Probable cytosol aminopeptidase of Chromohalobacter salexigens (strain ATCC BAA-138 / DSM 3043 / CIP 106854 / NCIMB 13768 / 1H11).